We begin with the raw amino-acid sequence, 199 residues long: Translation initiation factor IF-3 (199 aa).

Belongs to the IF-3 family. As to quaternary structure, monomer.

The protein resides in the cytoplasm. Its function is as follows. IF-3 binds to the 30S ribosomal subunit and shifts the equilibrium between 70S ribosomes and their 50S and 30S subunits in favor of the free subunits, thus enhancing the availability of 30S subunits on which protein synthesis initiation begins. This chain is Translation initiation factor IF-3, found in Gloeobacter violaceus (strain ATCC 29082 / PCC 7421).